Here is a 352-residue protein sequence, read N- to C-terminus: Photosystem II D2 protein (352 aa).

At T2 the chain carries N-acetylthreonine. T2 carries the phosphothreonine modification. The chain crosses the membrane as a helical span at residues 40 to 60 (CAYFALGGWLTGTTFVSSWYT). H117 lines the chlorophyll a pocket. A helical membrane pass occupies residues 124–140 (GFMLRQFEIARAVQIRP). 2 residues coordinate pheophytin a: Q129 and N142. A helical transmembrane segment spans residues 152–165 (VFVSVFLIYPLGQS). H197 serves as a coordination point for chlorophyll a. The helical transmembrane segment at 207-227 (AALLCAIHGATVENTLFEDGD) threads the bilayer. Residues H214 and F261 each coordinate a plastoquinone. H214 contributes to the Fe cation binding site. Fe cation is bound at residue H268. A helical membrane pass occupies residues 278 to 294 (GLWMSALGVVGLALNLR).

Belongs to the reaction center PufL/M/PsbA/D family. As to quaternary structure, PSII is composed of 1 copy each of membrane proteins PsbA, PsbB, PsbC, PsbD, PsbE, PsbF, PsbH, PsbI, PsbJ, PsbK, PsbL, PsbM, PsbT, PsbX, PsbY, PsbZ, Psb30/Ycf12, at least 3 peripheral proteins of the oxygen-evolving complex and a large number of cofactors. It forms dimeric complexes. The cofactor is The D1/D2 heterodimer binds P680, chlorophylls that are the primary electron donor of PSII, and subsequent electron acceptors. It shares a non-heme iron and each subunit binds pheophytin, quinone, additional chlorophylls, carotenoids and lipids. There is also a Cl(-1) ion associated with D1 and D2, which is required for oxygen evolution. The PSII complex binds additional chlorophylls, carotenoids and specific lipids..

It is found in the plastid. It localises to the chloroplast thylakoid membrane. The enzyme catalyses 2 a plastoquinone + 4 hnu + 2 H2O = 2 a plastoquinol + O2. Photosystem II (PSII) is a light-driven water:plastoquinone oxidoreductase that uses light energy to abstract electrons from H(2)O, generating O(2) and a proton gradient subsequently used for ATP formation. It consists of a core antenna complex that captures photons, and an electron transfer chain that converts photonic excitation into a charge separation. The D1/D2 (PsbA/PsbD) reaction center heterodimer binds P680, the primary electron donor of PSII as well as several subsequent electron acceptors. D2 is needed for assembly of a stable PSII complex. The chain is Photosystem II D2 protein from Ostreococcus tauri.